The sequence spans 375 residues: Queuine tRNA-ribosyltransferase (375 aa).

The active-site Proton acceptor is the D90. Residues 90 to 94 (DSGGF), D144, Q193, and G220 each bind substrate. Residues 251 to 257 (GVGTPED) are RNA binding. D270 acts as the Nucleophile in catalysis. Residues 275–279 (TRNAR) are RNA binding; important for wobble base 34 recognition. The Zn(2+) site is built by C308, C310, C313, and H339.

It belongs to the queuine tRNA-ribosyltransferase family. Homodimer. Within each dimer, one monomer is responsible for RNA recognition and catalysis, while the other monomer binds to the replacement base PreQ1. It depends on Zn(2+) as a cofactor.

It catalyses the reaction 7-aminomethyl-7-carbaguanine + guanosine(34) in tRNA = 7-aminomethyl-7-carbaguanosine(34) in tRNA + guanine. It functions in the pathway tRNA modification; tRNA-queuosine biosynthesis. Catalyzes the base-exchange of a guanine (G) residue with the queuine precursor 7-aminomethyl-7-deazaguanine (PreQ1) at position 34 (anticodon wobble position) in tRNAs with GU(N) anticodons (tRNA-Asp, -Asn, -His and -Tyr). Catalysis occurs through a double-displacement mechanism. The nucleophile active site attacks the C1' of nucleotide 34 to detach the guanine base from the RNA, forming a covalent enzyme-RNA intermediate. The proton acceptor active site deprotonates the incoming PreQ1, allowing a nucleophilic attack on the C1' of the ribose to form the product. After dissociation, two additional enzymatic reactions on the tRNA convert PreQ1 to queuine (Q), resulting in the hypermodified nucleoside queuosine (7-(((4,5-cis-dihydroxy-2-cyclopenten-1-yl)amino)methyl)-7-deazaguanosine). This chain is Queuine tRNA-ribosyltransferase, found in Herminiimonas arsenicoxydans.